The chain runs to 278 residues: Diaminopimelate epimerase (278 aa).

N11 and N75 together coordinate substrate. C84 acts as the Proton donor in catalysis. Substrate-binding positions include 85 to 86 (GN), N160, N195, and 213 to 214 (ER). C222 acts as the Proton acceptor in catalysis. Residue 223–224 (GT) participates in substrate binding.

The protein belongs to the diaminopimelate epimerase family. In terms of assembly, homodimer.

It is found in the cytoplasm. The enzyme catalyses (2S,6S)-2,6-diaminopimelate = meso-2,6-diaminopimelate. The protein operates within amino-acid biosynthesis; L-lysine biosynthesis via DAP pathway; DL-2,6-diaminopimelate from LL-2,6-diaminopimelate: step 1/1. In terms of biological role, catalyzes the stereoinversion of LL-2,6-diaminopimelate (L,L-DAP) to meso-diaminopimelate (meso-DAP), a precursor of L-lysine and an essential component of the bacterial peptidoglycan. The chain is Diaminopimelate epimerase from Corynebacterium aurimucosum (strain ATCC 700975 / DSM 44827 / CIP 107346 / CN-1) (Corynebacterium nigricans).